A 55-amino-acid chain; its full sequence is Cytochrome b-c1 complex subunit 9 (55 aa).

The Mitochondrial matrix segment spans residues 1–15 (MKVIYNTLFKRTSTY). The chain crosses the membrane as a helical span at residues 16-41 (AVAIIASAFFFERALDVTSVAIFEGI). Residues 42–55 (NKGKLWKDIKGKYE) are Chloroplast intermembrane-facing.

Belongs to the UQCR10/QCR9 family. Component of the ubiquinol-cytochrome c oxidoreductase (cytochrome b-c1 complex, complex III, CIII), a multisubunit enzyme composed of 3 respiratory subunits cytochrome b, cytochrome c1 and Rieske protein, 2 core protein subunits, and additional low-molecular weight protein subunits. The complex exists as an obligatory dimer and forms supercomplexes (SCs) in the inner mitochondrial membrane with cytochrome c oxidase (complex IV, CIV).

It is found in the mitochondrion inner membrane. Its function is as follows. Component of the ubiquinol-cytochrome c oxidoreductase, a multisubunit transmembrane complex that is part of the mitochondrial electron transport chain which drives oxidative phosphorylation. The respiratory chain contains 3 multisubunit complexes succinate dehydrogenase (complex II, CII), ubiquinol-cytochrome c oxidoreductase (cytochrome b-c1 complex, complex III, CIII) and cytochrome c oxidase (complex IV, CIV), that cooperate to transfer electrons derived from NADH and succinate to molecular oxygen, creating an electrochemical gradient over the inner membrane that drives transmembrane transport and the ATP synthase. The cytochrome b-c1 complex catalyzes electron transfer from ubiquinol to cytochrome c, linking this redox reaction to translocation of protons across the mitochondrial inner membrane, with protons being carried across the membrane as hydrogens on the quinol. In the process called Q cycle, 2 protons are consumed from the matrix, 4 protons are released into the intermembrane space and 2 electrons are passed to cytochrome c. This chain is Cytochrome b-c1 complex subunit 9 (ox), found in Drosophila melanogaster (Fruit fly).